Consider the following 254-residue polypeptide: 5-oxoprolinase subunit A (254 aa).

It belongs to the LamB/PxpA family. As to quaternary structure, forms a complex composed of PxpA, PxpB and PxpC.

The catalysed reaction is 5-oxo-L-proline + ATP + 2 H2O = L-glutamate + ADP + phosphate + H(+). In terms of biological role, catalyzes the cleavage of 5-oxoproline to form L-glutamate coupled to the hydrolysis of ATP to ADP and inorganic phosphate. The polypeptide is 5-oxoprolinase subunit A (Heliobacterium modesticaldum (strain ATCC 51547 / Ice1)).